The following is a 228-amino-acid chain: HTH-type transcriptional activator FasR (228 aa).

A disordered region spans residues 1-39 (MSDLAKTAQRRALRSSGSARPDEDVPAPNRRGNRLPRDE). The 61-residue stretch at 38 to 98 (DERRGQLLVV…AVLHRHVENL (61 aa)) folds into the HTH tetR-type domain. Positions 61 to 80 (GMDEIADRAGVSKPVLYQHF) form a DNA-binding region, H-T-H motif.

As to quaternary structure, homodimer.

With respect to regulation, fasR:DNA binding is regulated by long-chain acyl-CoAs (C14- to C26-CoA), which act as effector molecules that modulate the affinity of FasR for its DNA binding sequences and therefore modulate the expression of the essential fas-acpS operon. FasR activity is not affected by mycolic acid biosynthesis intermediates. Its function is as follows. Transcriptional activator that plays a central role in sensing mycobacterial long-chain fatty acids and regulating lipid biosynthesis. Activates the expression of the genes encoding the fatty acid synthase (fas) and the 4-phosphopantetheinyl transferase (acpS), whose products are involved in the fatty acid and mycolic acid biosynthesis. Specifically binds to three conserved operator sequences present in the fas-acpS promoter region. Not essential for M.tuberculosis viability, although it is required for the optimal growth in vitro and for virulence in macrophages and in a mouse model of infection. The polypeptide is HTH-type transcriptional activator FasR (Mycobacterium tuberculosis (strain ATCC 25618 / H37Rv)).